A 427-amino-acid chain; its full sequence is MPSIEAVGAREILDSRGNPTVEVEVVLEDGTLGRAAVPSGASTGAFEAVELRDGDNRYGGKGVTKAVAAVIDRIGPAIMELEATEQRLLDATLIDLDGTPGKSALGANALLGVSLAVAKAAAASSGLPLFRYLGGPTAHLLPVPMMNILNGGAHADTNVDIQEFMIAPIGASTFAESLRWGAEVYHALKSVLKARGLATGVGDEGGFAPSLPTNREALDLIAEGIDKAGFALGTDIALALDVASTEFYADGSYTFEGNSRSAEYLSDYYAELVSAYPIVSIEDPLAEDDWDGWVALTERLGGKVQLVGDDLFVTNPERLARGIALKAANALLVKVNQIGTLTETLDAVNLAHRSGYRAMMSHRSGETEDTTIADLAVAVDCGQIKTGAPARSERVAKYNQLLRIEEELDDAARYAGAAAFPRRRQAG.

A (2R)-2-phosphoglycerate-binding site is contributed by glutamine 162. Residue glutamate 204 is the Proton donor of the active site. 3 residues coordinate Mg(2+): aspartate 241, glutamate 282, and aspartate 309. Positions 334, 363, 364, and 385 each coordinate (2R)-2-phosphoglycerate. Lysine 334 (proton acceptor) is an active-site residue.

This sequence belongs to the enolase family. It depends on Mg(2+) as a cofactor.

It is found in the cytoplasm. The protein localises to the secreted. It localises to the cell surface. The enzyme catalyses (2R)-2-phosphoglycerate = phosphoenolpyruvate + H2O. It functions in the pathway carbohydrate degradation; glycolysis; pyruvate from D-glyceraldehyde 3-phosphate: step 4/5. Its function is as follows. Catalyzes the reversible conversion of 2-phosphoglycerate (2-PG) into phosphoenolpyruvate (PEP). It is essential for the degradation of carbohydrates via glycolysis. The protein is Enolase of Frankia casuarinae (strain DSM 45818 / CECT 9043 / HFP020203 / CcI3).